Consider the following 644-residue polypeptide: Exoribonuclease 2 (644 aa).

Residues 189–516 (REDLTALDFV…NHRLLKAVIK (328 aa)) form the RNB domain. The S1 motif domain occupies 561-643 (DTRFAAEIVD…ETRSIIARPV (83 aa)).

It belongs to the RNR ribonuclease family. RNase II subfamily.

Its subcellular location is the cytoplasm. The catalysed reaction is Exonucleolytic cleavage in the 3'- to 5'-direction to yield nucleoside 5'-phosphates.. Its function is as follows. Involved in mRNA degradation. Hydrolyzes single-stranded polyribonucleotides processively in the 3' to 5' direction. The chain is Exoribonuclease 2 from Escherichia coli O45:K1 (strain S88 / ExPEC).